The primary structure comprises 254 residues: Dihydroanticapsin 7-dehydrogenase (254 aa).

NAD(+) is bound at residue 9–31; that stretch reads LITGGASGIGYAAVQAFLNQQAN. Position 139 (S139) interacts with substrate. Y152 (proton acceptor) is an active-site residue.

This sequence belongs to the short-chain dehydrogenases/reductases (SDR) family.

It catalyses the reaction L-dihydroanticapsin + NAD(+) = L-anticapsin + NADH + H(+). It participates in antibiotic biosynthesis; bacilysin biosynthesis. In terms of biological role, part of the bacABCDEFG operon responsible for the biosynthesis of bacilysin, an irreversible inactivator of the glutaminase domain of glucosamine synthetase. Catalyzes the dehydrogenation of the C7-hydroxyl group in the 4S-tetrahydrotyrosine (4S-H4Tyr) to yield anticapsin (epoxycyclohexanonyl-Ala). This is Dihydroanticapsin 7-dehydrogenase from Bacillus amyloliquefaciens (Bacillus velezensis).